Consider the following 473-residue polypeptide: Protein TED1 (473 aa).

Residues 1–8 (MLRCAVKK) lie on the Cytoplasmic side of the membrane. Residues 9–29 (FAYFATFLTIVANIYIYTYPS) traverse the membrane as a helical segment. At 30-451 (FHPEQCSWNC…FSLCPFAIQH (422 aa)) the chain is on the lumenal side. 5 N-linked (GlcNAc...) asparagine glycosylation sites follow: asparagine 38, asparagine 147, asparagine 229, asparagine 266, and asparagine 307. A helical membrane pass occupies residues 452 to 472 (VWWFAKVSLLVTIFTWSSLLF). Valine 473 is a topological domain (cytoplasmic).

N-glycosylated.

The protein resides in the endoplasmic reticulum membrane. Acts together with EMP24 and ERV25 in cargo exit from the endoplasmic reticulum. This chain is Protein TED1 (TED1), found in Saccharomyces cerevisiae (strain ATCC 204508 / S288c) (Baker's yeast).